We begin with the raw amino-acid sequence, 1008 residues long: ATP-dependent DNA/RNA helicase DHX36 (1008 aa).

Residues 1–51 (MSYDYHQNWGRDGGPRSSGGGYGGGPAGGHGGNRGSGGGGGGGGGGRGGRG) form a required for recruitment to cytoplasmic stress granules region. The disordered stretch occupies residues 1 to 58 (MSYDYHQNWGRDGGPRSSGGGYGGGPAGGHGGNRGSGGGGGGGGGGRGGRGRHPGHLK). The interval 1 to 104 (MSYDYHQNWG…IVQLLNSVQA (104 aa)) is required for the pre-miR-134 transport. The tract at residues 1 to 200 (MSYDYHQNWG…KKNDLRYIEM (200 aa)) is necessary for nuclear and nucleolar caps localizations. The segment covering 16 to 48 (RSSGGGYGGGPAGGHGGNRGSGGGGGGGGGGRG) has biased composition (gly residues). A DSM (DHX36-specific motif) region spans residues 53–75 (HPGHLKGREIGMWYAKKQGQKNK). The tract at residues 53 to 105 (HPGHLKGREIGMWYAKKQGQKNKEAERQERAVVHMDERREEQIVQLLNSVQAK) is required for G4-DNA- and G4-RNA-binding. Residues 72–157 (QKNKEAERQE…INQEKKMFRI (86 aa)) are a coiled coil. 2 recA-like domain regions span residues 106–386 (NDKE…MIHI) and 387–628 (PGFT…DYQL). The residue at position 161 (Ser161) is a Phosphoserine. The 171-residue stretch at 217-387 (VNLIDNHQVT…FGNCPMIHIP (171 aa)) folds into the Helicase ATP-binding domain. 233-238 (GCGKTT) contacts ATP. Residues 265–317 (RRISAISVAERVAAERAESCGSGNSTGYQIRLQSRLPRKQGSILYCTTGIILQ) are necessary for interaction with single-stranded DNA at the 3'-end of the G4-DNA structure. A DEAH box motif is present at residues 334-337 (DEIH). Residues Glu335 and His337 each contribute to the Mg(2+) site. Positions 477–647 (ALIRYIVLEE…ELCLQIKILR (171 aa)) constitute a Helicase C-terminal domain. Residues 498–557 (WDNISTLHDLLMSQVMFKSDKFLIIPLHSLMPTVNQTQVFKRTPPGVRKIVIATNIAETS) are necessary for interaction with single-stranded DNA at the 3'-end of the G4-DNA structure. Residues 517-528 (DKFLIIPLHSLM) carry the Nuclear localization signal motif. ATP contacts are provided by residues Ser557 and 602-605 (RAGR). Residues 629 to 698 (PEILRTPLEE…LGVHLARLPV (70 aa)) are WH domain. Necessary for interaction with single-stranded DNA at the 3'-end of the G4-DNA structure regions lie at residues 638–697 (ELCL…ARLP), 849–860 (NLGKKRKMVKVY), and 870–900 (HPKS…IYLY). The tract at residues 841–905 (PKVAKIRLNL…SIYLYDCTEV (65 aa)) is OB-fold-like subdomains. Lys947 carries the post-translational modification N6-acetyllysine. Ser963 carries the post-translational modification Phosphoserine.

The protein belongs to the DEAD box helicase family. DEAH subfamily. As to quaternary structure, found in a multi-helicase-TICAM1 complex at least composed of DHX36, DDX1, DDX21 and TICAM1; this complex exists in resting cells with or without dsRNA poly(I:C) ligand stimulation. Interacts (via C-terminus) with TICAM1 (via TIR domain). Interacts (via C-terminus) with DDX21; this interaction serves as bridges to TICAM1. Interacts with TERT; this interaction is dependent on the ability of DHX36 to bind to the G-quadruplex RNA (G4-RNA) structure present in the telomerase RNA template component (TERC). Interacts with DKC1; this interaction is dependent on the ability of DHX36 to bind to the G4-RNA structure present in TERC. Interacts with PARN; this interaction stimulates PARN to enhance uPA mRNA decay. Interacts with EXOSC3; this interaction occurs in a RNase-insensitive manner. Interacts with EXOSC10; this interaction occurs in a RNase-insensitive manner. Interacts with ILF3; this interaction occurs in a RNA-dependent manner. Interacts with ELAVL1; this interaction occurs in an RNA-dependent manner. Interacts with DDX5; this interaction occurs in a RNA-dependent manner. Interacts with DDX17; this interaction occurs in a RNA-dependent manner. Interacts with HDAC1; this interaction occurs in a RNA-dependent manner. Interacts with HDAC3; this interaction occurs in a RNA-dependent manner. Interacts with HDAC4. Interacts with AGO1. Interacts with AGO2. Interacts with ERCC6. Requires Mg(2+) as cofactor. As to expression, highly expressed in testis.

The protein localises to the nucleus. It is found in the cytoplasm. It localises to the cytosol. Its subcellular location is the stress granule. The protein resides in the nucleus speckle. The protein localises to the chromosome. It is found in the telomere. It localises to the mitochondrion. Its subcellular location is the perikaryon. The protein resides in the cell projection. The protein localises to the dendrite. It is found in the axon. The enzyme catalyses ATP + H2O = ADP + phosphate + H(+). With respect to regulation, ATPase activity is enhanced in the presence of homomeric poly(U) RNAs, but not by double-stranded DNA (dsDNA), double-stranded RNA (dsRNA) and tRNA. Functionally, multifunctional ATP-dependent helicase that unwinds G-quadruplex (G4) structures. Plays a role in many biological processes such as genomic integrity, gene expression regulations and as a sensor to initiate antiviral responses. G4 structures correspond to helical structures containing guanine tetrads. Binds with high affinity to and unwinds G4 structures that are formed in nucleic acids (G4-DNA and G4-RNA). Plays a role in genomic integrity. Converts the G4-RNA structure present in telomerase RNA template component (TREC) into a double-stranded RNA to promote P1 helix formation that acts as a template boundary ensuring accurate reverse transcription. Plays a role in transcriptional regulation. Resolves G4-DNA structures in promoters of genes, such as YY1, KIT/c-kit and ALPL and positively regulates their expression. Plays a role in post-transcriptional regulation. Unwinds a G4-RNA structure located in the 3'-UTR polyadenylation site of the pre-mRNA TP53 and stimulates TP53 pre-mRNA 3'-end processing in response to ultraviolet (UV)-induced DNA damage. Binds to the precursor-microRNA-134 (pre-miR-134) terminal loop and regulates its transport into the synapto-dendritic compartment. Involved in the pre-miR-134-dependent inhibition of target gene expression and the control of dendritic spine size. Plays a role in the regulation of cytoplasmic mRNA translation and mRNA stability. Binds to both G4-RNA structures and alternative non-quadruplex-forming sequence within the 3'-UTR of the PITX1 mRNA regulating negatively PITX1 protein expression. Binds to both G4-RNA structure in the 5'-UTR and AU-rich elements (AREs) localized in the 3'-UTR of NKX2-5 mRNA to either stimulate protein translation or induce mRNA decay in an ELAVL1-dependent manner, respectively. Also binds to ARE sequences present in several mRNAs mediating exosome-mediated 3'-5' mRNA degradation. Involved in cytoplasmic urokinase-type plasminogen activator (uPA) mRNA decay. Component of a multi-helicase-TICAM1 complex that acts as a cytoplasmic sensor of viral double-stranded RNA (dsRNA) and plays a role in the activation of a cascade of antiviral responses including the induction of pro-inflammatory cytokines via the adapter molecule TICAM1. Required for early embryonic development and hematopoiesis. Involved in the regulation of cardioblast differentiation and proliferation during heart development. Involved in spermatogonia differentiation. May play a role in ossification. This is ATP-dependent DNA/RNA helicase DHX36 from Homo sapiens (Human).